The chain runs to 230 residues: UPF0173 metal-dependent hydrolase Rsph17029_0942 (230 aa).

It belongs to the UPF0173 family.

The sequence is that of UPF0173 metal-dependent hydrolase Rsph17029_0942 from Cereibacter sphaeroides (strain ATCC 17029 / ATH 2.4.9) (Rhodobacter sphaeroides).